The chain runs to 351 residues: Histidine-rich glycoprotein (351 aa).

An N-terminal signal peptide occupies residues 1–23; that stretch reads MFTSLKKVATFSFLVWISQYSGS. Residues 24-47 constitute a propeptide that is removed on maturation; sequence NSCSSSLVKHIPQTGSNLTFDRVL. A glycan (N-linked (GlcNAc...) asparagine) is linked at asparagine 40. Residues 57–91 show a composition bias toward basic and acidic residues; sequence LHEEHHHHHPEEHHEPHHEEHHHHHPEEHHEPHHE. Positions 57 to 351 are disordered; it reads LHEEHHHHHP…DAHHHHHHHH (295 aa). 6 tandem repeats follow at residues 59 to 74, 75 to 90, 91 to 107, 108 to 123, 124 to 138, and 139 to 153. The 2 X 16 AA tandem repeats stretch occupies residues 59-90; it reads EEHHHHHPEEHHEPHHEEHHHHHPEEHHEPHH. A 2 X 17 AA tandem repeats region spans residues 91 to 123; it reads EEHHHHHPHPHHHHHHHPPHHHHHLGHHHHHHH. The segment covering 92–351 has biased composition (basic residues); that stretch reads EHHHHHPHPH…DAHHHHHHHH (260 aa). The 2 X 15 AA tandem repeats stretch occupies residues 124-153; sequence AAHHHHHEEHHHHHHAAHHHHHEEHHHHHH. The tract at residues 173–351 is 18 X 10 AA tandem repeats; that stretch reads APHHHHHHHH…DAHHHHHHHH (179 aa).

The protein is Histidine-rich glycoprotein of Plasmodium lophurae.